Here is a 234-residue protein sequence, read N- to C-terminus: Adenosine 5'-phosphosulfate reductase (234 aa).

4 residues coordinate [4Fe-4S] cluster: C120, C121, C203, and C206. Residue C229 is the Nucleophile; cysteine thiosulfonate intermediate of the active site.

It belongs to the PAPS reductase family. CysH subfamily. Requires [4Fe-4S] cluster as cofactor.

It localises to the cytoplasm. It catalyses the reaction [thioredoxin]-disulfide + sulfite + AMP + 2 H(+) = adenosine 5'-phosphosulfate + [thioredoxin]-dithiol. Its pathway is sulfur metabolism; hydrogen sulfide biosynthesis; sulfite from sulfate. Its function is as follows. Catalyzes the formation of sulfite from adenosine 5'-phosphosulfate (APS) using thioredoxin as an electron donor. This is Adenosine 5'-phosphosulfate reductase from Bacillus thuringiensis subsp. konkukian (strain 97-27).